Here is a 241-residue protein sequence, read N- to C-terminus: Ubiquinone biosynthesis O-methyltransferase (241 aa).

The S-adenosyl-L-methionine site is built by Arg-46, Gly-66, Asp-87, and Met-131.

This sequence belongs to the methyltransferase superfamily. UbiG/COQ3 family.

The catalysed reaction is a 3-demethylubiquinol + S-adenosyl-L-methionine = a ubiquinol + S-adenosyl-L-homocysteine + H(+). It catalyses the reaction a 3-(all-trans-polyprenyl)benzene-1,2-diol + S-adenosyl-L-methionine = a 2-methoxy-6-(all-trans-polyprenyl)phenol + S-adenosyl-L-homocysteine + H(+). The protein operates within cofactor biosynthesis; ubiquinone biosynthesis. Functionally, O-methyltransferase that catalyzes the 2 O-methylation steps in the ubiquinone biosynthetic pathway. The protein is Ubiquinone biosynthesis O-methyltransferase of Bordetella parapertussis (strain 12822 / ATCC BAA-587 / NCTC 13253).